Consider the following 376-residue polypeptide: Thymidine kinase (376 aa).

Positions Met-1–Gln-44 are disordered. Positions Ser-19–Arg-32 are enriched in basic residues. The span at Arg-33–Gln-44 shows a compositional bias: basic and acidic residues. Gly-56 to Thr-63 is an ATP binding site. The active-site Proton acceptor is Glu-83. Substrate-binding residues include Tyr-101 and Gln-125. Arg-216 contributes to the ATP binding site. Arg-222 is a binding site for substrate. Residues Gly-260–Pro-280 are disordered.

The protein belongs to the herpesviridae thymidine kinase family. As to quaternary structure, homodimer.

It catalyses the reaction thymidine + ATP = dTMP + ADP + H(+). In terms of biological role, catalyzes the transfer of the gamma-phospho group of ATP to thymidine to generate dTMP in the salvage pathway of pyrimidine synthesis. The dTMP serves as a substrate for DNA polymerase during viral DNA replication. Allows the virus to be reactivated and to grow in non-proliferative cells lacking a high concentration of phosphorylated nucleic acid precursors. The sequence is that of Thymidine kinase from Human herpesvirus 1 (strain SC16) (HHV-1).